The sequence spans 301 residues: Phosphatidylglycerol--prolipoprotein diacylglyceryl transferase (301 aa).

Helical transmembrane passes span 10 to 30, 57 to 77, 92 to 112, and 119 to 139; these read IAFS…LAGF, LLFY…MLFY, VWEG…AVAW, and MHMF…LGFG. Residue Arg140 participates in a 1,2-diacyl-sn-glycero-3-phospho-(1'-sn-glycerol) binding. The next 3 membrane-spanning stretches (helical) occupy residues 202–222, 230–250, and 264–284; these read PSQL…LWLF, YAVS…VEFV, and LTRG…LFWL.

The protein belongs to the Lgt family.

Its subcellular location is the cell inner membrane. It catalyses the reaction L-cysteinyl-[prolipoprotein] + a 1,2-diacyl-sn-glycero-3-phospho-(1'-sn-glycerol) = an S-1,2-diacyl-sn-glyceryl-L-cysteinyl-[prolipoprotein] + sn-glycerol 1-phosphate + H(+). It functions in the pathway protein modification; lipoprotein biosynthesis (diacylglyceryl transfer). Functionally, catalyzes the transfer of the diacylglyceryl group from phosphatidylglycerol to the sulfhydryl group of the N-terminal cysteine of a prolipoprotein, the first step in the formation of mature lipoproteins. The polypeptide is Phosphatidylglycerol--prolipoprotein diacylglyceryl transferase (Xylella fastidiosa (strain M12)).